A 576-amino-acid chain; its full sequence is Lysine--tRNA ligase (576 aa).

2 residues coordinate Mg(2+): glutamate 412 and glutamate 419.

Belongs to the class-II aminoacyl-tRNA synthetase family. In terms of assembly, homodimer. The cofactor is Mg(2+).

It is found in the cytoplasm. It carries out the reaction tRNA(Lys) + L-lysine + ATP = L-lysyl-tRNA(Lys) + AMP + diphosphate. This Parabacteroides distasonis (strain ATCC 8503 / DSM 20701 / CIP 104284 / JCM 5825 / NCTC 11152) protein is Lysine--tRNA ligase.